Here is a 527-residue protein sequence, read N- to C-terminus: Pyruvate kinase 2, cytosolic (527 aa).

Arginine 58 serves as a coordination point for substrate. The K(+) site is built by aspartate 60, serine 62, aspartate 92, and threonine 93. Position 60–63 (60–63 (DFSW)) interacts with ATP. Lysine 256 serves as a coordination point for substrate. Mg(2+) is bound at residue glutamate 258. The substrate site is built by glycine 281, asparagine 282, and threonine 313. Mg(2+) is bound at residue asparagine 282.

The protein belongs to the pyruvate kinase family. Homotetramer. Requires Mg(2+) as cofactor. The cofactor is K(+).

The protein localises to the cytoplasm. Its subcellular location is the cytosol. It catalyses the reaction pyruvate + ATP = phosphoenolpyruvate + ADP + H(+). The protein operates within carbohydrate degradation; glycolysis; pyruvate from D-glyceraldehyde 3-phosphate: step 5/5. Its function is as follows. Key regulatory enzyme of the glycolytic pathway that catalyzes the final step of glycolysis, converting ADP and phosphoenolpyruvate (PEP) to ATP and pyruvate by essentially irreversible transphosphorylation. This is Pyruvate kinase 2, cytosolic from Oryza sativa subsp. indica (Rice).